The sequence spans 199 residues: dTTP/UTP pyrophosphatase (199 aa).

The active-site Proton acceptor is the D78.

Belongs to the Maf family. YhdE subfamily. It depends on a divalent metal cation as a cofactor.

Its subcellular location is the cytoplasm. It catalyses the reaction dTTP + H2O = dTMP + diphosphate + H(+). The enzyme catalyses UTP + H2O = UMP + diphosphate + H(+). Its function is as follows. Nucleoside triphosphate pyrophosphatase that hydrolyzes dTTP and UTP. May have a dual role in cell division arrest and in preventing the incorporation of modified nucleotides into cellular nucleic acids. This chain is dTTP/UTP pyrophosphatase, found in Clostridium acetobutylicum (strain ATCC 824 / DSM 792 / JCM 1419 / IAM 19013 / LMG 5710 / NBRC 13948 / NRRL B-527 / VKM B-1787 / 2291 / W).